A 748-amino-acid polypeptide reads, in one-letter code: Choline O-acetyltransferase (748 aa).

Residues 1 to 10 (MGLRTAKKRG) are compositionally biased toward basic residues. The interval 1-89 (MGLRTAKKRG…EWCGAASAEA (89 aa)) is disordered. The segment covering 17 to 32 (WKREEGGGTRGRREVR) has biased composition (basic and acidic residues). Residues 40 to 53 (GGRGDPGDVGGPAG) are compositionally biased toward gly residues. Composition is skewed to low complexity over residues 54-65 (NPGCSPHPRAAT) and 73-89 (HTPA…SAEA). Serine 125 bears the Phosphoserine mark. The Proton acceptor role is filled by histidine 442. Serine 473 bears the Phosphoserine mark. CoA-binding positions include 520-532 (GKTF…CSPD), serine 558, and glutamine 659. The tract at residues 727–748 (PTESKPLATKEKATRPSQGHQP) is disordered.

Belongs to the carnitine/choline acetyltransferase family.

The enzyme catalyses choline + acetyl-CoA = acetylcholine + CoA. Its function is as follows. Catalyzes the reversible synthesis of acetylcholine (ACh) from acetyl CoA and choline at cholinergic synapses. The protein is Choline O-acetyltransferase (CHAT) of Homo sapiens (Human).